Here is a 100-residue protein sequence, read N- to C-terminus: Large ribosomal subunit protein uL23 (100 aa).

The protein belongs to the universal ribosomal protein uL23 family. As to quaternary structure, part of the 50S ribosomal subunit. Contacts protein L29, and trigger factor when it is bound to the ribosome.

Its function is as follows. One of the early assembly proteins it binds 23S rRNA. One of the proteins that surrounds the polypeptide exit tunnel on the outside of the ribosome. Forms the main docking site for trigger factor binding to the ribosome. In Xylella fastidiosa (strain M23), this protein is Large ribosomal subunit protein uL23.